The primary structure comprises 201 residues: Recombination protein RecR (201 aa).

The segment at 59–74 (CSRCQNFCEAELCSIC) adopts a C4-type zinc-finger fold. In terms of domain architecture, Toprim spans 82–177 (RVLCVVESPT…PVSRIAHGIP (96 aa)).

The protein belongs to the RecR family.

Functionally, may play a role in DNA repair. It seems to be involved in an RecBC-independent recombinational process of DNA repair. It may act with RecF and RecO. This is Recombination protein RecR from Hahella chejuensis (strain KCTC 2396).